The sequence spans 101 residues: uncharacterized protein (101 aa).

2 consecutive transmembrane segments (helical) span residues 3 to 23 and 68 to 88; these read IIGS…AIIF and VIVL…IIVI.

The protein localises to the cell membrane. This is an uncharacterized protein from Ureaplasma parvum serovar 3 (strain ATCC 700970).